A 326-amino-acid chain; its full sequence is Cyclin-dependent kinase B2-1 (326 aa).

The 291-residue stretch at 28–318 (YEKLEKVGEG…AKKAMEHPYF (291 aa)) folds into the Protein kinase domain. ATP-binding positions include 34–42 (VGEGTYGKV) and K57. At T38 the chain carries Phosphothreonine. Y39 bears the Phosphotyrosine mark. D159 functions as the Proton acceptor in the catalytic mechanism. T193 is modified (phosphothreonine).

The protein belongs to the protein kinase superfamily. CMGC Ser/Thr protein kinase family. CDC2/CDKX subfamily. As to quaternary structure, interacts with CYCB2-1 and CYCB2-2. Binding to CYCB2-1 or CYCB2-2 activates CDK kinase. Expressed in the dividing region of the root apex and the intercalary meristem of internodes.

Its subcellular location is the nucleus. It localises to the cytoplasm. The protein localises to the cytoskeleton. The protein resides in the spindle. It is found in the phragmoplast. It carries out the reaction L-seryl-[protein] + ATP = O-phospho-L-seryl-[protein] + ADP + H(+). It catalyses the reaction L-threonyl-[protein] + ATP = O-phospho-L-threonyl-[protein] + ADP + H(+). The catalysed reaction is [DNA-directed RNA polymerase] + ATP = phospho-[DNA-directed RNA polymerase] + ADP + H(+). In terms of biological role, forms a complex with CYCB2-1 or CYCB2-2 that activates CDK kinase in tobacco BY2 cells during G2/M (mitosis) phases. May be involved in the regulation of the cell cycle at the G2/M transition. This is Cyclin-dependent kinase B2-1 (CDKB2-1) from Oryza sativa subsp. japonica (Rice).